A 208-amino-acid chain; its full sequence is Large ribosomal subunit protein uL4 (208 aa).

It belongs to the universal ribosomal protein uL4 family. In terms of assembly, part of the 50S ribosomal subunit.

Functionally, one of the primary rRNA binding proteins, this protein initially binds near the 5'-end of the 23S rRNA. It is important during the early stages of 50S assembly. It makes multiple contacts with different domains of the 23S rRNA in the assembled 50S subunit and ribosome. Its function is as follows. Forms part of the polypeptide exit tunnel. The protein is Large ribosomal subunit protein uL4 of Solibacter usitatus (strain Ellin6076).